Reading from the N-terminus, the 393-residue chain is Outer membrane protein assembly factor BamB (393 aa).

Residues 1–19 form the signal peptide; the sequence is MQLRKTLLVGLVSVALLSG. The N-palmitoyl cysteine moiety is linked to residue C20. C20 carries the S-diacylglycerol cysteine lipid modification.

Belongs to the BamB family. Part of the Bam complex, which is composed of the outer membrane protein BamA, and four lipoproteins BamB, BamC, BamD and BamE.

The protein localises to the cell outer membrane. Its function is as follows. Part of the outer membrane protein assembly complex, which is involved in assembly and insertion of beta-barrel proteins into the outer membrane. The protein is Outer membrane protein assembly factor BamB of Yersinia pestis.